We begin with the raw amino-acid sequence, 716 residues long: Antibacterial effector protein Tle3 (716 aa).

Residues P68–L87 are disordered.

Interacts in the cytoplasm with the adapter protein Tla3. Interacts in the periplasm with the immunity protein Tli3.

The protein resides in the secreted. It localises to the host periplasm. Its activity is regulated as follows. Neutralized by the immunity protein Tli3 in the periplasm of P.aeruginosa cells. Functionally, antibacterial effector. Is toxic once delivered in the periplasm of prey bacteria. This chain is Antibacterial effector protein Tle3, found in Pseudomonas aeruginosa (strain ATCC 15692 / DSM 22644 / CIP 104116 / JCM 14847 / LMG 12228 / 1C / PRS 101 / PAO1).